The chain runs to 440 residues: Phosphatidylglycerol--prolipoprotein diacylglyceryl transferase (440 aa).

The next 4 helical transmembrane spans lie at 21 to 41, 53 to 73, 96 to 116, and 122 to 142; these read VPIR…LLIG, GVIY…GRLY, IWDG…GAWI, and GIPL…AQAI. Arg-144 serves as a coordination point for a 1,2-diacyl-sn-glycero-3-phospho-(1'-sn-glycerol). 2 helical membrane passes run 189–209 and 256–276; these read VALV…LIFV and INSF…MAAP. The disordered stretch occupies residues 280-440; the sequence is EDPESLRGNQ…ARLRDRLSGR (161 aa). Residues 299-330 show a composition bias toward low complexity; it reads EPATVAATTEAATEGVAAPADGAEAAGADATA. Basic and acidic residues predominate over residues 332–346; it reads RPEESAEPDVEKPES. Residues 347–417 show a composition bias toward acidic residues; sequence EETEAEAAEE…PEQPVAEEPE (71 aa). The span at 424–440 shows a compositional bias: basic and acidic residues; it reads ETKRRWGARLRDRLSGR.

Belongs to the Lgt family.

Its subcellular location is the cell membrane. It catalyses the reaction L-cysteinyl-[prolipoprotein] + a 1,2-diacyl-sn-glycero-3-phospho-(1'-sn-glycerol) = an S-1,2-diacyl-sn-glyceryl-L-cysteinyl-[prolipoprotein] + sn-glycerol 1-phosphate + H(+). It functions in the pathway protein modification; lipoprotein biosynthesis (diacylglyceryl transfer). Catalyzes the transfer of the diacylglyceryl group from phosphatidylglycerol to the sulfhydryl group of the N-terminal cysteine of a prolipoprotein, the first step in the formation of mature lipoproteins. In Mycobacterium avium (strain 104), this protein is Phosphatidylglycerol--prolipoprotein diacylglyceryl transferase.